A 212-amino-acid chain; its full sequence is Ropporin-1B (212 aa).

The 38-residue stretch at 12 to 49 (PELPKMLKEFAKAAIRAQPQDLIQWGADYFEALSRGET) folds into the RIIa domain. Ser56 bears the Phosphoserine mark. The interaction with RHPN1 stretch occupies residues 209 to 212 (VWLE).

The protein belongs to the ropporin family. Homodimer. Interacts with RHPN1. May interact with SPA17. Interacts with AKAP3. Interacts with FSCB; the interaction increases upon spermatozoa capacitation conditions. Post-translationally, sumoylated, sumoylation decreases upon spermatozoa capacitation conditions.

It is found in the cell projection. The protein localises to the cilium. Its subcellular location is the flagellum. In terms of biological role, important for male fertility. With ROPN1L, involved in fibrous sheath integrity and sperm motility, plays a role in PKA-dependent signaling processes required for spermatozoa capacitation. The protein is Ropporin-1B (ROPN1B) of Homo sapiens (Human).